A 49-amino-acid chain; its full sequence is Large ribosomal subunit protein bL33 (49 aa).

The protein belongs to the bacterial ribosomal protein bL33 family.

This is Large ribosomal subunit protein bL33 from Clostridium botulinum (strain Alaska E43 / Type E3).